Here is a 500-residue protein sequence, read N- to C-terminus: NAD(P)H-quinone oxidoreductase chain 4, chloroplastic (500 aa).

A run of 14 helical transmembrane segments spans residues 3–23, 37–57, 87–107, 113–130, 134–154, 167–187, 208–228, 242–262, 272–292, 305–325, 330–350, 386–406, 416–436, and 462–482; these read FFPWLTIIVVLPISAGSLIFF, ICICLLELLLITYVFCYHFQL, IGPILLTGFITTLATLAAWPI, LFHFLMLAMYSGQIGSFS, LLLFFIMWELELIPVYLLLSM, FILYTAGGSIFLLMGVLGMGL, ALEIMFYFGFLIAYAVKSPII, HYSTCMLLAGILLKMGAYGLV, AHSIFSPWLMIVGTIQIIYAA, IAYSSVSHMGFTIIGIGSITD, GAVLQIISHGFIGAALFFLAG, LALPGMSGFVAELIVFFGIIT, ILITFVMAIGMILTPIYSLSM, and LFVSISIFLPVIGIGIYPDFV.

The protein belongs to the complex I subunit 4 family.

Its subcellular location is the plastid. It localises to the chloroplast thylakoid membrane. It catalyses the reaction a plastoquinone + NADH + (n+1) H(+)(in) = a plastoquinol + NAD(+) + n H(+)(out). The enzyme catalyses a plastoquinone + NADPH + (n+1) H(+)(in) = a plastoquinol + NADP(+) + n H(+)(out). This chain is NAD(P)H-quinone oxidoreductase chain 4, chloroplastic, found in Platanus occidentalis (Sycamore).